The chain runs to 372 residues: tRNA-specific 2-thiouridylase MnmA (372 aa).

ATP contacts are provided by residues 11-18 (GMSGGVDS) and Met37. Residues 97 to 99 (NPD) form an interaction with target base in tRNA region. Cys102 acts as the Nucleophile in catalysis. Cys102 and Cys199 are oxidised to a cystine. Gly126 contacts ATP. An interaction with tRNA region spans residues 149-151 (KDQ). Cys199 functions as the Cysteine persulfide intermediate in the catalytic mechanism. Residues 309-310 (RY) are interaction with tRNA.

Belongs to the MnmA/TRMU family.

Its subcellular location is the cytoplasm. The enzyme catalyses S-sulfanyl-L-cysteinyl-[protein] + uridine(34) in tRNA + AH2 + ATP = 2-thiouridine(34) in tRNA + L-cysteinyl-[protein] + A + AMP + diphosphate + H(+). Catalyzes the 2-thiolation of uridine at the wobble position (U34) of tRNA, leading to the formation of s(2)U34. This chain is tRNA-specific 2-thiouridylase MnmA, found in Staphylococcus aureus (strain USA300).